Here is a 153-residue protein sequence, read N- to C-terminus: Small ribosomal subunit protein uS13 (153 aa).

This sequence belongs to the universal ribosomal protein uS13 family. Part of the 30S ribosomal subunit. Forms a loose heterodimer with protein S19. Forms two bridges to the 50S subunit in the 70S ribosome.

In terms of biological role, located at the top of the head of the 30S subunit, it contacts several helices of the 16S rRNA. In the 70S ribosome it contacts the 23S rRNA (bridge B1a) and protein L5 of the 50S subunit (bridge B1b), connecting the 2 subunits; these bridges are implicated in subunit movement. In Pyrobaculum islandicum (strain DSM 4184 / JCM 9189 / GEO3), this protein is Small ribosomal subunit protein uS13.